Consider the following 98-residue polypeptide: uncharacterized protein (98 aa).

An N-terminal signal peptide occupies residues 1–23 (MKKMQSIVLALSLVLVAPMAAQA). The disordered stretch occupies residues 68–98 (WHLHGPPPPPRHHKKAPHDHHGGHGPGKHHR). Over residues 77–98 (PRHHKKAPHDHHGGHGPGKHHR) the composition is skewed to basic residues.

The protein to E.coli YpeC.

This is an uncharacterized protein from Escherichia coli (strain K12).